The chain runs to 673 residues: Polygalacturonate 4-alpha-galacturonosyltransferase (673 aa).

Residues 1–22 (MALKRGLSGVNRIRGSGGGSRS) are Cytoplasmic-facing. Residues 23–43 (VLVLLIFFCVFAPLCFFVGRG) traverse the membrane as a helical; Signal-anchor for type II membrane protein segment. Residues 44–673 (VYIDSSNDYS…PYLRRCNLHE (630 aa)) are Lumenal-facing. N-linked (GlcNAc...) asparagine glycosylation occurs at asparagine 103. The disordered stretch occupies residues 112–136 (GVDPSFRHSENPATPDVKSNNLNEK). N-linked (GlcNAc...) asparagine glycans are attached at residues asparagine 382, asparagine 434, asparagine 538, and asparagine 585.

The protein belongs to the glycosyltransferase 8 family. Expressed in seedlings, inflorescences, flowers, siliques, pollen, roots, stems and leaves.

The protein resides in the golgi apparatus membrane. The enzyme catalyses [(1-&gt;4)-alpha-D-galacturonosyl](n) + UDP-alpha-D-galacturonate = [(1-&gt;4)-alpha-D-galacturonosyl](n+1) + UDP + H(+). It functions in the pathway glycan metabolism; pectin biosynthesis. Involved in pectin biosynthesis. Catalyzes the transfer of galacturonic acid from uridine 5'-diphosphogalacturonic acid onto the pectic polysaccharide homogalacturonan. In Arabidopsis thaliana (Mouse-ear cress), this protein is Polygalacturonate 4-alpha-galacturonosyltransferase (GAUT1).